The sequence spans 419 residues: 3-isopropylmalate dehydratase large subunit (419 aa).

[4Fe-4S] cluster contacts are provided by C301, C361, and C364.

It belongs to the aconitase/IPM isomerase family. LeuC type 2 subfamily. Heterodimer of LeuC and LeuD. The cofactor is [4Fe-4S] cluster.

The enzyme catalyses (2R,3S)-3-isopropylmalate = (2S)-2-isopropylmalate. It functions in the pathway amino-acid biosynthesis; L-leucine biosynthesis; L-leucine from 3-methyl-2-oxobutanoate: step 2/4. Functionally, catalyzes the isomerization between 2-isopropylmalate and 3-isopropylmalate, via the formation of 2-isopropylmaleate. The sequence is that of 3-isopropylmalate dehydratase large subunit from Campylobacter hominis (strain ATCC BAA-381 / DSM 21671 / CCUG 45161 / LMG 19568 / NCTC 13146 / CH001A).